The chain runs to 460 residues: Bifunctional protein GlmU (460 aa).

The tract at residues 1 to 229 (MKNYAIILAA…FDESLGVNDR (229 aa)) is pyrophosphorylase. Residues 8-11 (LAAG), lysine 22, glutamine 72, and 77-78 (GT) each bind UDP-N-acetyl-alpha-D-glucosamine. Aspartate 102 contributes to the Mg(2+) binding site. 4 residues coordinate UDP-N-acetyl-alpha-D-glucosamine: glycine 139, glutamate 154, asparagine 169, and asparagine 227. Asparagine 227 contributes to the Mg(2+) binding site. Residues 230–250 (LALAQAEVIMQERINKQHMLN) form a linker region. The interval 251 to 460 (GVTLQNPAAT…RLPHHPDQPQ (210 aa)) is N-acetyltransferase. The UDP-N-acetyl-alpha-D-glucosamine site is built by arginine 332 and lysine 350. Histidine 362 serves as the catalytic Proton acceptor. 2 residues coordinate UDP-N-acetyl-alpha-D-glucosamine: tyrosine 365 and asparagine 376. Acetyl-CoA-binding positions include alanine 379, 385 to 386 (NY), serine 404, alanine 422, and arginine 439.

The protein in the N-terminal section; belongs to the N-acetylglucosamine-1-phosphate uridyltransferase family. This sequence in the C-terminal section; belongs to the transferase hexapeptide repeat family. Homotrimer. The cofactor is Mg(2+).

The protein localises to the cytoplasm. It carries out the reaction alpha-D-glucosamine 1-phosphate + acetyl-CoA = N-acetyl-alpha-D-glucosamine 1-phosphate + CoA + H(+). It catalyses the reaction N-acetyl-alpha-D-glucosamine 1-phosphate + UTP + H(+) = UDP-N-acetyl-alpha-D-glucosamine + diphosphate. It participates in nucleotide-sugar biosynthesis; UDP-N-acetyl-alpha-D-glucosamine biosynthesis; N-acetyl-alpha-D-glucosamine 1-phosphate from alpha-D-glucosamine 6-phosphate (route II): step 2/2. Its pathway is nucleotide-sugar biosynthesis; UDP-N-acetyl-alpha-D-glucosamine biosynthesis; UDP-N-acetyl-alpha-D-glucosamine from N-acetyl-alpha-D-glucosamine 1-phosphate: step 1/1. The protein operates within bacterial outer membrane biogenesis; LPS lipid A biosynthesis. Its function is as follows. Catalyzes the last two sequential reactions in the de novo biosynthetic pathway for UDP-N-acetylglucosamine (UDP-GlcNAc). The C-terminal domain catalyzes the transfer of acetyl group from acetyl coenzyme A to glucosamine-1-phosphate (GlcN-1-P) to produce N-acetylglucosamine-1-phosphate (GlcNAc-1-P), which is converted into UDP-GlcNAc by the transfer of uridine 5-monophosphate (from uridine 5-triphosphate), a reaction catalyzed by the N-terminal domain. In Streptococcus equi subsp. zooepidemicus (strain ATCC 35246 / C74-63), this protein is Bifunctional protein GlmU.